The chain runs to 335 residues: N-acetyl-gamma-glutamyl-phosphate reductase (335 aa).

Residue C147 is part of the active site.

The protein belongs to the NAGSA dehydrogenase family. Type 1 subfamily.

The protein localises to the cytoplasm. The catalysed reaction is N-acetyl-L-glutamate 5-semialdehyde + phosphate + NADP(+) = N-acetyl-L-glutamyl 5-phosphate + NADPH + H(+). It participates in amino-acid biosynthesis; L-arginine biosynthesis; N(2)-acetyl-L-ornithine from L-glutamate: step 3/4. In terms of biological role, catalyzes the NADPH-dependent reduction of N-acetyl-5-glutamyl phosphate to yield N-acetyl-L-glutamate 5-semialdehyde. The sequence is that of N-acetyl-gamma-glutamyl-phosphate reductase from Sulfurovum sp. (strain NBC37-1).